The sequence spans 422 residues: Zinc-regulated transporter 2 (422 aa).

The Extracellular portion of the chain corresponds to 1–27; that stretch reads MVDLIARDDSVDTCQASNGYNGHAGLR. Residues 28-48 form a helical membrane-spanning segment; the sequence is ILAVFIILISSGLGVYFPILS. The Cytoplasmic portion of the chain corresponds to 49–60; that stretch reads SRYSFIRLPNWC. The chain crosses the membrane as a helical span at residues 61–81; sequence FFIAKFFGSGVIVATAFVHLL. The Extracellular segment spans residues 82-99; the sequence is QPAAEALGDECLGGTFAE. A helical membrane pass occupies residues 100–120; sequence YPWAFGICLMSLFLLFFTEII. Topologically, residues 121-262 are cytoplasmic; it reads THYFVAKTLG…EEDKEQYLNQ (142 aa). 4 positions are modified to phosphoserine: Ser148, Ser149, Ser162, and Ser170. Phosphothreonine is present on Thr188. A helical transmembrane segment spans residues 263–283; the sequence is ILAVFILEFGIIFHSVFVGLS. Over 284-290 the chain is Extracellular; the sequence is LSVAGEE. The helical transmembrane segment at 291-311 threads the bilayer; the sequence is FETLFIVLTFHQMFEGLGLGT. Residues 312–326 are Cytoplasmic-facing; sequence RVAETNWPESKKYMP. The chain crosses the membrane as a helical span at residues 327 to 347; it reads WLMGLAFTLTSPIAVAVGIGV. Residues 348-358 lie on the Extracellular side of the membrane; the sequence is RHSWIPGSRRA. Residues 359 to 379 traverse the membrane as a helical segment; that stretch reads LIANGVFDSISSGILIYTGLV. At 380–400 the chain is on the cytoplasmic side; sequence ELMAHEFLYSNQFKGPDGLKK. A helical membrane pass occupies residues 401–421; the sequence is MLSAYLIMCCGAALMALLGKW. A topological domain (extracellular) is located at residue Ala422.

It belongs to the ZIP transporter (TC 2.A.5) family.

Its subcellular location is the membrane. Its function is as follows. Low-affinity zinc transport protein. Active in zinc-replete cells and is time-, temperature- and concentration-dependent and prefers zinc over other metals as its substrate. The sequence is that of Zinc-regulated transporter 2 (ZRT2) from Saccharomyces cerevisiae (strain ATCC 204508 / S288c) (Baker's yeast).